A 260-amino-acid polypeptide reads, in one-letter code: UPF0294 protein plu0699 (260 aa).

Belongs to the UPF0294 family.

Its subcellular location is the cytoplasm. This chain is UPF0294 protein plu0699, found in Photorhabdus laumondii subsp. laumondii (strain DSM 15139 / CIP 105565 / TT01) (Photorhabdus luminescens subsp. laumondii).